The sequence spans 66 residues: Large ribosomal subunit protein bL35 (66 aa).

Residues 1 to 26 (MPKMKTHRGSAKRFKKTGSGKLKRSH) are compositionally biased toward basic residues. The disordered stretch occupies residues 1–45 (MPKMKTHRGSAKRFKKTGSGKLKRSHAYTSHLFANKSQKQKRKLR).

The protein belongs to the bacterial ribosomal protein bL35 family.

The chain is Large ribosomal subunit protein bL35 from Bacillus velezensis (strain DSM 23117 / BGSC 10A6 / LMG 26770 / FZB42) (Bacillus amyloliquefaciens subsp. plantarum).